The chain runs to 117 residues: Ribosome-binding factor A (117 aa).

It belongs to the RbfA family. In terms of assembly, monomer. Binds 30S ribosomal subunits, but not 50S ribosomal subunits or 70S ribosomes.

It is found in the cytoplasm. In terms of biological role, one of several proteins that assist in the late maturation steps of the functional core of the 30S ribosomal subunit. Associates with free 30S ribosomal subunits (but not with 30S subunits that are part of 70S ribosomes or polysomes). Required for efficient processing of 16S rRNA. May interact with the 5'-terminal helix region of 16S rRNA. In Streptococcus suis (strain 98HAH33), this protein is Ribosome-binding factor A.